The following is a 195-amino-acid chain: Glucagon family neuropeptides (195 aa).

An N-terminal signal peptide occupies residues 1-20; sequence MAKSSRATLALLIYGILMRY. The propeptide occupies 21–82; it reads SQCTPIGMGF…YYPPERRAET (62 aa). Positions 113–132 are disordered; sequence VGEEEEDEEDSEPLSKRHSD. Residues 115–124 are compositionally biased toward acidic residues; the sequence is EEEEDEEDSE. The residue at position 167 (K167) is a Lysine amide. Residues 171-195 constitute a propeptide that is removed on maturation; the sequence is LVVPSVWTGIRDTVIITPEKRGKRY.

Belongs to the glucagon family. As to expression, brain, testis, ovary and stomach. Not pancreas, pituitary, muscle and liver.

The protein resides in the secreted. Primary role of GHRH is to release GH from the pituitary. Functionally, PACAP plays pivotal roles as a neurotransmitter and/or a neuromodulator. The sequence is that of Glucagon family neuropeptides from Clarias macrocephalus (Bighead catfish).